Here is a 281-residue protein sequence, read N- to C-terminus: Probable endonuclease 4 (281 aa).

Zn(2+) contacts are provided by His-69, His-109, Glu-145, Asp-179, His-182, His-216, Asp-229, His-231, and Glu-261.

The protein belongs to the AP endonuclease 2 family. Requires Zn(2+) as cofactor.

The enzyme catalyses Endonucleolytic cleavage to 5'-phosphooligonucleotide end-products.. Endonuclease IV plays a role in DNA repair. It cleaves phosphodiester bonds at apurinic or apyrimidinic (AP) sites, generating a 3'-hydroxyl group and a 5'-terminal sugar phosphate. The protein is Probable endonuclease 4 of Chlorobaculum tepidum (strain ATCC 49652 / DSM 12025 / NBRC 103806 / TLS) (Chlorobium tepidum).